The primary structure comprises 274 residues: Large ribosomal subunit protein uL2 (274 aa).

The tract at residues 224–256 is disordered; it reads VMNPVDHPHGGGEGKTGEGRHPVDPWGNLTKGY. The span at 229 to 246 shows a compositional bias: basic and acidic residues; the sequence is DHPHGGGEGKTGEGRHPV.

Belongs to the universal ribosomal protein uL2 family. Part of the 50S ribosomal subunit. Forms a bridge to the 30S subunit in the 70S ribosome.

Functionally, one of the primary rRNA binding proteins. Required for association of the 30S and 50S subunits to form the 70S ribosome, for tRNA binding and peptide bond formation. It has been suggested to have peptidyltransferase activity; this is somewhat controversial. Makes several contacts with the 16S rRNA in the 70S ribosome. The chain is Large ribosomal subunit protein uL2 from Polaromonas sp. (strain JS666 / ATCC BAA-500).